A 1088-amino-acid chain; its full sequence is MDAWKEITKTTENDGVSTCSLSSIAFDPYSELVWTGHKNGQIKSSFGPSLTSYTQFIGHEGPVHQVLPQERGVFSLSSKSLRLSNRKGTIRWRYQDSDCIDYRAMFYQSRNNPEVVIGGYHQKLTVVNAERGISIHKDKNVSDIFIMRRNRLLCCGSTNGEIILRDPNSFQPVNKVVAHTGTISDIDTSGNLLLSCGYSLRHGTYMLDPFVKVWDLRNLSSLVPIPFPAGPTIIRMHPKLSTTAVVCSCSGQFHIVDTGNPLDAKLMQIPLTSYLTGMDIASTGDAMVFTDVEDNIHLWSPLENPSFSDLKLPIQLPNTSTETVQLENNDPLNSIGLPYYKDELLSSWSKYLIFDVGKPILDSNLLIAKQISENSHPVPQEIKSFHRNQIIEVPWLNRKLISEGATPKFHSERQKDIMSGNDIEGSASYFEEIEDTISGPDSIPKFYQRPVIKYSKFGIEDFDFGFYNKTKYAGLETDITNSYCNSVLQLLSYVPSFSKAAISHSLGPCDLMECLLCELGFLFAMLKESTGRNCQATNFLRAFSNSSFAQSLGIVFDDYSDGTFPDSFVIQKFTKFMLTEISRIADYEDKKDGTSFPVSFLLKSFCIPEMQTYRCGICGITSQKIKSSLYIIDLHYPSQQLESILSFEWLFKMSLDRRVDLPPGWCEYCLAHQPFLLRSFIRSLPDCLFINTQVKHHEHWKLWARKNWLPKKLHLRRVNDTMQCVSQKISNLDKDQQSLSVYVLRGIIYEIRQNGEEPHFVSTIRVSDNTSSDNPDDNRWYIFNDFLVKEVTEEEALTVHGPWKIPIIVYYEKLDTKIPQWDEVSDYTLLYQPYSLNKNPPINKIQPLTTDEMLYPKMLVGIDSEFVALQQEETEVRSDGTKSTIKPSKLSLARVSVLRGEGPNKGLPFIDDYVATDDKVTDYLTEYSGIHPGDLDPDRSPYNVVPLKVAYKKLRLLVNAGCIFVGHGLQKDFRIINLLVPPEQVVDTVDLFFLSSRQRKLSLKFLAWYLLDEEIQLTEHDSIEDALTALKLYDCYDKLKSQGKLEETLDNIYEVGRRFKFRPPSVASMSLEDRNSYGDESVISNQTN.

WD repeat units lie at residues 16–56 (VSTC…YTQF), 136–175 (HKDK…PVNK), 178–224 (AHTG…SLVP), and 270–309 (PLTS…SFSD). The interval 309–443 (DLKLPIQLPN…EDTISGPDSI (135 aa)) is linker. Residues 443–814 (IPKFYQRPVI…IPIIVYYEKL (372 aa)) form the USP domain. The 174-residue stretch at 860–1033 (VGIDSEFVAL…EDALTALKLY (174 aa)) folds into the Exonuclease domain. A divalent metal cation is bound by residues D863, E865, D972, and D1025.

It belongs to the peptidase C19 family. PAN2 subfamily. Forms a heterotrimer with an asymmetric homodimer of the regulatory subunit ppk26/pan3 to form the poly(A)-nuclease (PAN) deadenylation complex. A divalent metal cation serves as cofactor.

The protein resides in the cytoplasm. The catalysed reaction is Exonucleolytic cleavage of poly(A) to 5'-AMP.. With respect to regulation, positively regulated by the regulatory subunit ppk26/pan3. In terms of biological role, catalytic subunit of the poly(A)-nuclease (PAN) deadenylation complex, one of two cytoplasmic mRNA deadenylases involved in mRNA turnover. PAN specifically shortens poly(A) tails of RNA and the activity is stimulated by poly(A)-binding protein pab1. PAN deadenylation is followed by rapid degradation of the shortened mRNA tails by the CCR4-NOT complex. Deadenylated mRNAs are then degraded by two alternative mechanisms, namely exosome-mediated 3'-5' exonucleolytic degradation, or deadenylation-dependent mRNA decaping and subsequent 5'-3' exonucleolytic degradation by xrn1. May also be involved in post-transcriptional maturation of mRNA poly(A) tails. The polypeptide is PAN2-PAN3 deadenylation complex catalytic subunit pan2 (Schizosaccharomyces pombe (strain 972 / ATCC 24843) (Fission yeast)).